A 115-amino-acid polypeptide reads, in one-letter code: Thrombospondin type-1 domain-containing protein 8 (115 aa).

The N-terminal stretch at 1-21 (MARTPGALLLAPLLLLQLATP) is a signal peptide. One can recognise a TSP type-1 domain in the interval 53–104 (DSILGPWGKWRCLCDLGKQERSREVVGTAPGPVFMDPEKLIQLRPCRQRDCP).

The sequence is that of Thrombospondin type-1 domain-containing protein 8 from Homo sapiens (Human).